Here is a 1004-residue protein sequence, read N- to C-terminus: Presequence protease, mitochondrial (1004 aa).

The N-terminal 34 residues, 1-34 (MLRNAAAGARKAVTELSQFPKPGEKLHGFTLVRS), are a transit peptide targeting the mitochondrion. His84 contributes to the Zn(2+) binding site. Glu87 (proton acceptor) is an active-site residue. Zn(2+) is bound at residue His88. Glu160 is a catalytic residue. Position 188 (Glu188) interacts with Zn(2+).

This sequence belongs to the peptidase M16 family. PreP subfamily. As to quaternary structure, monomer and homodimer; homodimerization is induced by binding of the substrate. The cofactor is Zn(2+).

The protein resides in the mitochondrion intermembrane space. It localises to the mitochondrion matrix. Degrades mitochondrial transit peptides after their cleavage in the intermembrane space or in the matrix, and presequence peptides; clearance of these peptides is required to keep the presequence processing machinery running. Preferentially cleaves the N-terminal side of paired basic amino acid residues. Also degrades other unstructured peptides. May function as an ATP-dependent peptidase as opposed to a metalloendopeptidase. In Gibberella zeae (strain ATCC MYA-4620 / CBS 123657 / FGSC 9075 / NRRL 31084 / PH-1) (Wheat head blight fungus), this protein is Presequence protease, mitochondrial (CYM1).